Consider the following 201-residue polypeptide: Recombination protein RecR (201 aa).

The segment at 59–74 adopts a C4-type zinc-finger fold; sequence CEICGNMDTENICRIC. Residues 82–177 form the Toprim domain; sequence SIIAIVETVA…KISRLASGIP (96 aa).

The protein belongs to the RecR family.

In terms of biological role, may play a role in DNA repair. It seems to be involved in an RecBC-independent recombinational process of DNA repair. It may act with RecF and RecO. This chain is Recombination protein RecR, found in Rickettsia rickettsii (strain Iowa).